Reading from the N-terminus, the 299-residue chain is UTP--glucose-1-phosphate uridylyltransferase (299 aa).

This sequence belongs to the UDPGP type 2 family.

The catalysed reaction is alpha-D-glucose 1-phosphate + UTP + H(+) = UDP-alpha-D-glucose + diphosphate. It functions in the pathway carbohydrate metabolism; nucleotide-sugar metabolism. It participates in capsule biogenesis; capsule polysaccharide biosynthesis. This is UTP--glucose-1-phosphate uridylyltransferase (cap4C) from Streptococcus pneumoniae serotype 4 (strain ATCC BAA-334 / TIGR4).